Consider the following 181-residue polypeptide: Adenine phosphoribosyltransferase (181 aa).

It belongs to the purine/pyrimidine phosphoribosyltransferase family. Homodimer.

The protein localises to the cytoplasm. The enzyme catalyses AMP + diphosphate = 5-phospho-alpha-D-ribose 1-diphosphate + adenine. Its pathway is purine metabolism; AMP biosynthesis via salvage pathway; AMP from adenine: step 1/1. Catalyzes a salvage reaction resulting in the formation of AMP, that is energically less costly than de novo synthesis. The sequence is that of Adenine phosphoribosyltransferase from Methylorubrum populi (strain ATCC BAA-705 / NCIMB 13946 / BJ001) (Methylobacterium populi).